The following is a 1158-amino-acid chain: ATP-dependent helicase/deoxyribonuclease subunit B (1158 aa).

The region spanning 1–275 (MTLHAYLGRA…QYFNQLYRFN (275 aa)) is the UvrD-like helicase ATP-binding domain. Position 8-15 (8-15 (GRAGTGKS)) interacts with ATP. Positions 269–583 (NQLYRFNNQD…SIGTMDLAKV (315 aa)) constitute a UvrD-like helicase C-terminal domain. Residues Cys784, Cys1112, Cys1115, and Cys1121 each contribute to the [4Fe-4S] cluster site.

Belongs to the helicase family. AddB/RexB type 1 subfamily. Heterodimer of AddA and AddB. Requires Mg(2+) as cofactor. [4Fe-4S] cluster is required as a cofactor.

In terms of biological role, the heterodimer acts as both an ATP-dependent DNA helicase and an ATP-dependent, dual-direction single-stranded exonuclease. Recognizes the chi site generating a DNA molecule suitable for the initiation of homologous recombination. The AddB subunit has 5' -&gt; 3' nuclease activity but not helicase activity. The protein is ATP-dependent helicase/deoxyribonuclease subunit B of Staphylococcus aureus (strain MSSA476).